The chain runs to 374 residues: Severin (374 aa).

Gelsolin-like repeat units follow at residues 58–109 (FTLE…DEYG), 180–220 (EGKT…KCSA), and 278–369 (EVIK…SFLK).

This sequence belongs to the villin/gelsolin family.

Its function is as follows. Severin blocks the ends of F-actin and causes the fragmentation and depolymerization of actin filaments. This severin binds stably with actin both in a Ca(2+) dependent and a Ca(2+) independent manner. In Echinococcus granulosus (Hydatid tapeworm), this protein is Severin (AG8).